Consider the following 147-residue polypeptide: Phosphoribosyl-AMP cyclohydrolase 2 (147 aa).

Asp-99 is a binding site for Mg(2+). Cys-100 contributes to the Zn(2+) binding site. Mg(2+) contacts are provided by Asp-101 and Asp-103. The Zn(2+) site is built by Cys-116 and Cys-123.

The protein belongs to the PRA-CH family. In terms of assembly, homodimer. Mg(2+) is required as a cofactor. Zn(2+) serves as cofactor.

The protein resides in the cytoplasm. The enzyme catalyses 1-(5-phospho-beta-D-ribosyl)-5'-AMP + H2O = 1-(5-phospho-beta-D-ribosyl)-5-[(5-phospho-beta-D-ribosylamino)methylideneamino]imidazole-4-carboxamide. It functions in the pathway amino-acid biosynthesis; L-histidine biosynthesis; L-histidine from 5-phospho-alpha-D-ribose 1-diphosphate: step 3/9. Functionally, catalyzes the hydrolysis of the adenine ring of phosphoribosyl-AMP. The sequence is that of Phosphoribosyl-AMP cyclohydrolase 2 from Pseudomonas fluorescens (strain ATCC BAA-477 / NRRL B-23932 / Pf-5).